A 78-amino-acid polypeptide reads, in one-letter code: Acyl carrier protein (78 aa).

One can recognise a Carrier domain in the interval Ser-2–Gln-77. An O-(pantetheine 4'-phosphoryl)serine modification is found at Ser-37.

It belongs to the acyl carrier protein (ACP) family. Post-translationally, 4'-phosphopantetheine is transferred from CoA to a specific serine of apo-ACP by AcpS. This modification is essential for activity because fatty acids are bound in thioester linkage to the sulfhydryl of the prosthetic group.

The protein localises to the cytoplasm. It functions in the pathway lipid metabolism; fatty acid biosynthesis. Carrier of the growing fatty acid chain in fatty acid biosynthesis. The sequence is that of Acyl carrier protein from Pectobacterium atrosepticum (strain SCRI 1043 / ATCC BAA-672) (Erwinia carotovora subsp. atroseptica).